The sequence spans 389 residues: tRNA-specific 2-thiouridylase MnmA (389 aa).

ATP contacts are provided by residues 9–16 (GMSGGVDS) and Met35. The tract at residues 95 to 97 (NPD) is interaction with target base in tRNA. The active-site Nucleophile is Cys100. Cys100 and Cys196 are oxidised to a cystine. ATP is bound at residue Gly124. The interaction with tRNA stretch occupies residues 146 to 148 (KDQ). The active-site Cysteine persulfide intermediate is the Cys196. The segment at 308 to 309 (RY) is interaction with tRNA.

The protein belongs to the MnmA/TRMU family.

It is found in the cytoplasm. It carries out the reaction S-sulfanyl-L-cysteinyl-[protein] + uridine(34) in tRNA + AH2 + ATP = 2-thiouridine(34) in tRNA + L-cysteinyl-[protein] + A + AMP + diphosphate + H(+). Its function is as follows. Catalyzes the 2-thiolation of uridine at the wobble position (U34) of tRNA, leading to the formation of s(2)U34. This Burkholderia ambifaria (strain MC40-6) protein is tRNA-specific 2-thiouridylase MnmA.